The sequence spans 776 residues: MKLVIVESPAKAKTINKYLGDEFKVIASFGHIRDLPSKKGSVLPDENFAMKYDISDKAGKYVDAIVKDAKKADAVYLATDPDREGEAISWHVAEVIKEKNKVKSDDFFKRVAFNEITKKAIIHAVENPRKLDANLVNAQQARRALDYLVGFTLSPLLWRKLPGCKSAGRVQSVALRLICEREDEIERFKSEEYWDISLKMQNSNNELFTAKLTHVNDQKLEKFSIINEKDAKDLTEKLKSQNFHVDKIEKKQQKRQPQPPFITSSLQQEAARKLGFSAKKTMQIAQKLYEGVDIGKETIGLITYMRTDGVTLSNDAIADIRKLIDKNYGDKYLPNSPRIYKSKVKNAQEAHEAIRPTNITYTPDSLKEKLEKDYYKLYELIWKRTIACQMENVIMDLVVASLASENKEYLAKANGSTIAFDGFYKVYRESVDDEAEEENKMLPPLKEQEPLKTKEIIPNQHFTEPPPRYSEASLVKKLEELGIGRPSTYASILSVLQDRKYVSLEKKRFMPEELGRLVTVFLVGFFKKYVEYDFTAGLENELDEIAAGKLEWKAALNNFWSGFNHNIESVNEQKITEIISYVQKALDYHLFSENKESKACPSCKTGELSLKLGKFGAFLACSNYPECTFRKSIVSGNDNNENDGDLAATPNENKVLGTDKDGIEIYLKKGPYGPYVQLGEQEGKVKPKRSPVPASLNQNDITLEMALKLLSLPLKIGIHKDSGEEIMIGYGKFGPYIKYMGKFISIPKKYDFLNLSLDDAMKLIEDNKAKLEKKQA.

Residues 1 to 111 form the Toprim domain; that stretch reads MKLVIVESPA…VKSDDFFKRV (111 aa). The Mg(2+) site is built by Glu-7 and Asp-80. Positions 132 to 568 constitute a Topo IA-type catalytic domain; it reads DANLVNAQQA…FWSGFNHNIE (437 aa). The interval 166-171 is interaction with DNA; it reads SAGRVQ. The O-(5'-phospho-DNA)-tyrosine intermediate role is filled by Tyr-304. Residues 600 to 627 form a C4-type zinc finger; the sequence is CPSCKTGELSLKLGKFGAFLACSNYPEC.

It belongs to the type IA topoisomerase family. In terms of assembly, monomer. The cofactor is Mg(2+).

It carries out the reaction ATP-independent breakage of single-stranded DNA, followed by passage and rejoining.. Its function is as follows. Releases the supercoiling and torsional tension of DNA, which is introduced during the DNA replication and transcription, by transiently cleaving and rejoining one strand of the DNA duplex. Introduces a single-strand break via transesterification at a target site in duplex DNA. The scissile phosphodiester is attacked by the catalytic tyrosine of the enzyme, resulting in the formation of a DNA-(5'-phosphotyrosyl)-enzyme intermediate and the expulsion of a 3'-OH DNA strand. The free DNA strand then undergoes passage around the unbroken strand, thus removing DNA supercoils. Finally, in the religation step, the DNA 3'-OH attacks the covalent intermediate to expel the active-site tyrosine and restore the DNA phosphodiester backbone. This Rickettsia felis (strain ATCC VR-1525 / URRWXCal2) (Rickettsia azadi) protein is DNA topoisomerase 1.